The following is a 417-amino-acid chain: Interferon regulatory factor 3 (417 aa).

At threonine 3 the chain carries Phosphothreonine. Residues 5–111 constitute a DNA-binding region (IRF tryptophan pentad repeat); sequence KPRILPWLIS…DPHKIYEFVN (107 aa). At serine 14 the chain carries Phosphoserine. Threonine 75 carries the phosphothreonine modification. Phosphoserine is present on residues serine 97 and serine 123. Disordered stretches follow at residues 111-134 and 147-170; these read NSGVRDIPEPDTSQDNGRHNTSDT and DLSPGGPSNLTMASEKPPQFLQSP. The interval 140–417 is mediates interaction with ZDHHC11; that stretch reads EKLLSDMDLS…LQDLAEDMDF (278 aa). Serine 184 is modified (phosphoserine). Lysine 189 is covalently cross-linked (Glycyl lysine isopeptide (Lys-Gly) (interchain with G-Cter in ISG15)). An interaction with HERC5 region spans residues 196–356; that stretch reads EDWEFEVTAF…SWPQDQPWIK (161 aa). Position 249 is a phosphothreonine (threonine 249). Cysteine 263 and cysteine 285 are joined by a disulfide. Glycyl lysine isopeptide (Lys-Gly) (interchain with G-Cter in ISG15) cross-links involve residues lysine 356 and lysine 362. Lysine 362 bears the N6-acetyllysine mark. Residue serine 381 is modified to Phosphoserine. Serine 382 is subject to Diphosphoserine. Serine 382 carries the post-translational modification Phosphoserine; by TBK1. Serine 392 carries the phosphoserine; by IKKE modification. Serine 394 is subject to Phosphoserine. Residue threonine 400 is modified to Phosphothreonine.

Belongs to the IRF family. Monomer. Homodimer; phosphorylation-induced. Interacts (when phosphorylated) with CREBBP. Interacts with MAVS (via phosphorylated pLxIS motif). Interacts with TICAM1 (via phosphorylated pLxIS motif). Interacts with STING1 (via phosphorylated pLxIS motif). Interacts with IKBKE and TBK1. Interacts with TICAM2. Interacts with RBCK1. Interacts with HERC5. Interacts with DDX3X; the interaction allows the phosphorylation and activation of IRF3 by IKBKE. Interacts with TRIM21 and ULK1, in the presence of TRIM21; this interaction leads to IRF3 degradation by autophagy. Interacts with RIOK3; RIOK3 probably mediates the interaction of TBK1 with IRF3. Interacts with ILRUN; the interaction inhibits IRF3 binding to its DNA consensus sequence. Interacts with LYAR; this interaction impairs IRF3 DNA-binding activity. Interacts with TRAF3. Interacts with ZDHHC11; ZDHHC11 recruits IRF3 to STING1 upon DNA virus infection and thereby promotes IRF3 activation. Interacts with HSP90AA1; the interaction mediates IRF3 association with TOMM70. Interacts with BCL2; the interaction decreases upon Sendai virus infection. Interacts with BAX; the interaction is direct, increases upon virus infection and mediates the formation of the apoptosis complex TOMM70:HSP90AA1:IRF3:BAX. Interacts with DDX56. Interacts with NBR1. Post-translationally, constitutively phosphorylated on many Ser/Thr residues. Activated following phosphorylation by TBK1 and IKBKE. Innate adapter proteins, such as MAVS, STING1 or TICAM1, are first activated by viral RNA, cytosolic DNA, and bacterial lipopolysaccharide (LPS), respectively, leading to activation of the kinases TBK1 and IKBKE. These kinases then phosphorylate the adapter proteins on the pLxIS motif, leading to recruitment of IRF3, thereby licensing IRF3 for phosphorylation by TBK1. Phosphorylation at Ser-382 is followed by pyrophosphorylation at the same residue, promoting phosphorylation at Ser-392. Phosphorylated IRF3 dissociates from the adapter proteins, dimerizes, and then enters the nucleus to induce IFNs. Pyrophosphorylated by UAP1 following phosphorylation at Ser-382 by TBK1. Pyrophosphorylation promotes subsequent phosphorylation at Ser-392, leading to homodimerization of IRF3. In terms of processing, acetylation at Lys-362 by KAT8 inhibits recruimtent to promoters and transcription factor activity. Acetylation by KAT8 is promoted by phosphorylation at Ser-392. Post-translationally, ubiquitinated; ubiquitination involves RBCK1 leading to proteasomal degradation. Polyubiquitinated; ubiquitination involves TRIM21 leading to proteasomal degradation. Ubiquitinated by UBE3C, leading to its degradation. Deubiquitinated by USP5 on both 'Lys-48'-linked unanchored and 'Lys-63'-linked anchored polyubiquitin, leading to inhibition of anti-RNA viral innate immunity. ISGylated by HERC5 resulting in sustained IRF3 activation and in the inhibition of IRF3 ubiquitination by disrupting PIN1 binding. The phosphorylation state of IRF3 does not alter ISGylation. In terms of processing, proteolytically cleaved by apoptotic caspases during apoptosis, leading to its inactivation. Cleavage by CASP3 during virus-induced apoptosis inactivates it, preventing cytokine overproduction.

The protein resides in the cytoplasm. The protein localises to the nucleus. It is found in the mitochondrion. With respect to regulation, in the absence of viral infection, maintained as a monomer in an autoinhibited state. Phosphorylation by TBK1 and IKBKE disrupts this autoinhibition leading to the liberation of the DNA-binding and dimerization activities and its nuclear localization where it can activate type I IFN and ISG genes. Phosphorylation and activation follow the following steps: innate adapter proteins, such as MAVS, STING1 or TICAM1, are first activated by viral RNA, cytosolic DNA and bacterial lipopolysaccharide (LPS), respectively, leading to activation of the kinases TBK1 and IKBKE. These kinases then phosphorylate the adapter proteins on their pLxIS motif, leading to recruitment of IRF3, thereby licensing IRF3 for phosphorylation by TBK1. Phosphorylated IRF3 dissociates from the adapter proteins, dimerizes, and then enters the nucleus to induce IFNs. Functionally, key transcriptional regulator of type I interferon (IFN)-dependent immune responses which plays a critical role in the innate immune response against DNA and RNA viruses. Regulates the transcription of type I IFN genes (IFN-alpha and IFN-beta) and IFN-stimulated genes (ISG) by binding to an interferon-stimulated response element (ISRE) in their promoters. Acts as a more potent activator of the IFN-beta (IFNB) gene than the IFN-alpha (IFNA) gene and plays a critical role in both the early and late phases of the IFNA/B gene induction. Found in an inactive form in the cytoplasm of uninfected cells and following viral infection, double-stranded RNA (dsRNA), or toll-like receptor (TLR) signaling, is phosphorylated by IKBKE and TBK1 kinases. This induces a conformational change, leading to its dimerization and nuclear localization and association with CREB binding protein (CREBBP) to form dsRNA-activated factor 1 (DRAF1), a complex which activates the transcription of the type I IFN and ISG genes. Can activate distinct gene expression programs in macrophages and can induce significant apoptosis in primary macrophages. The polypeptide is Interferon regulatory factor 3 (IRF3) (Bos taurus (Bovine)).